We begin with the raw amino-acid sequence, 54 residues long: UPF0391 membrane protein Aave_3864 (54 aa).

The next 2 helical transmembrane spans lie at 5 to 25 and 28 to 48; these read AVVF…GIAA and VGIA…TFVL.

This sequence belongs to the UPF0391 family.

It localises to the cell membrane. This is UPF0391 membrane protein Aave_3864 from Paracidovorax citrulli (strain AAC00-1) (Acidovorax citrulli).